Here is a 220-residue protein sequence, read N- to C-terminus: Thiopurine S-methyltransferase (220 aa).

The S-adenosyl-L-methionine site is built by Trp-10, Leu-45, Glu-66, and Arg-123.

Belongs to the class I-like SAM-binding methyltransferase superfamily. TPMT family.

It is found in the cytoplasm. It carries out the reaction S-adenosyl-L-methionine + a thiopurine = S-adenosyl-L-homocysteine + a thiopurine S-methylether.. The chain is Thiopurine S-methyltransferase from Nitrosospira multiformis (strain ATCC 25196 / NCIMB 11849 / C 71).